Reading from the N-terminus, the 431-residue chain is Glutamate--tRNA ligase 1 (431 aa).

Positions 6–16 match the 'HIGH' region motif; that stretch reads PSPTGDMHIGN. A 'KMSKS' region motif is present at residues 235-239; that stretch reads KMSKR. An ATP-binding site is contributed by Lys-238.

The protein belongs to the class-I aminoacyl-tRNA synthetase family. Glutamate--tRNA ligase type 1 subfamily. Monomer.

The protein localises to the cytoplasm. The enzyme catalyses tRNA(Glu) + L-glutamate + ATP = L-glutamyl-tRNA(Glu) + AMP + diphosphate. In terms of biological role, catalyzes the attachment of glutamate to tRNA(Glu) in a two-step reaction: glutamate is first activated by ATP to form Glu-AMP and then transferred to the acceptor end of tRNA(Glu). This Campylobacter concisus (strain 13826) protein is Glutamate--tRNA ligase 1.